The primary structure comprises 359 residues: Uracil-DNA glycosylase (359 aa).

The transit peptide at 1-21 directs the protein to the mitochondrion; it reads MWCMRRLPTNSVMTVARKRKQ. Catalysis depends on aspartate 162, which acts as the Proton acceptor.

Belongs to the uracil-DNA glycosylase (UDG) superfamily. UNG family.

It localises to the mitochondrion. The protein resides in the nucleus. It catalyses the reaction Hydrolyzes single-stranded DNA or mismatched double-stranded DNA and polynucleotides, releasing free uracil.. Its function is as follows. Excises uracil residues from the DNA which can arise as a result of misincorporation of dUMP residues by DNA polymerase or due to deamination of cytosine. Not involved in strand-directed mismatch repair. The protein is Uracil-DNA glycosylase of Saccharomyces cerevisiae (strain ATCC 204508 / S288c) (Baker's yeast).